Consider the following 367-residue polypeptide: Phosphoribosylaminoimidazole-succinocarboxamide synthase (367 aa).

This sequence belongs to the SAICAR synthetase family.

The enzyme catalyses 5-amino-1-(5-phospho-D-ribosyl)imidazole-4-carboxylate + L-aspartate + ATP = (2S)-2-[5-amino-1-(5-phospho-beta-D-ribosyl)imidazole-4-carboxamido]succinate + ADP + phosphate + 2 H(+). The protein operates within purine metabolism; IMP biosynthesis via de novo pathway; 5-amino-1-(5-phospho-D-ribosyl)imidazole-4-carboxamide from 5-amino-1-(5-phospho-D-ribosyl)imidazole-4-carboxylate: step 1/2. The polypeptide is Phosphoribosylaminoimidazole-succinocarboxamide synthase (Shewanella frigidimarina (strain NCIMB 400)).